The chain runs to 500 residues: Trans-cinnamate 4-monooxygenase (500 aa).

A helical membrane pass occupies residues 3 to 23; sequence ALLVEKVLLGLFVAAVLALVV. (E)-cinnamate contacts are provided by residues 213–218 and Ala302; that span reads RSRLSQ. Cys442 serves as a coordination point for heme.

It belongs to the cytochrome P450 family. The cofactor is heme. In terms of tissue distribution, expressed in roots and leaves.

It is found in the membrane. The enzyme catalyses (E)-cinnamate + reduced [NADPH--hemoprotein reductase] + O2 = (E)-4-coumarate + oxidized [NADPH--hemoprotein reductase] + H2O + H(+). The protein operates within phenylpropanoid metabolism; trans-4-coumarate biosynthesis; trans-4-coumarate from trans-cinnamate: step 1/1. In terms of biological role, catalyzes the first oxidative step of the phenylpropanoid pathway in higher plants by transforming trans-cinnamate into p-coumarate. The compounds formed by this pathway are essential components for lignification, pollination, and defense against ultraviolet light, predators and pathogens. The sequence is that of Trans-cinnamate 4-monooxygenase from Oryza sativa subsp. japonica (Rice).